Reading from the N-terminus, the 298-residue chain is Bifunctional protein FolD (298 aa).

Residues 167–169 (GRS), Ser192, and Val233 each bind NADP(+).

Belongs to the tetrahydrofolate dehydrogenase/cyclohydrolase family. In terms of assembly, homodimer.

It carries out the reaction (6R)-5,10-methylene-5,6,7,8-tetrahydrofolate + NADP(+) = (6R)-5,10-methenyltetrahydrofolate + NADPH. The catalysed reaction is (6R)-5,10-methenyltetrahydrofolate + H2O = (6R)-10-formyltetrahydrofolate + H(+). The protein operates within one-carbon metabolism; tetrahydrofolate interconversion. In terms of biological role, catalyzes the oxidation of 5,10-methylenetetrahydrofolate to 5,10-methenyltetrahydrofolate and then the hydrolysis of 5,10-methenyltetrahydrofolate to 10-formyltetrahydrofolate. This is Bifunctional protein FolD from Chelativorans sp. (strain BNC1).